Reading from the N-terminus, the 349-residue chain is Histidinol-phosphate aminotransferase (349 aa).

Lys-206 is subject to N6-(pyridoxal phosphate)lysine.

It belongs to the class-II pyridoxal-phosphate-dependent aminotransferase family. Histidinol-phosphate aminotransferase subfamily. In terms of assembly, homodimer. The cofactor is pyridoxal 5'-phosphate.

It catalyses the reaction L-histidinol phosphate + 2-oxoglutarate = 3-(imidazol-4-yl)-2-oxopropyl phosphate + L-glutamate. It functions in the pathway amino-acid biosynthesis; L-histidine biosynthesis; L-histidine from 5-phospho-alpha-D-ribose 1-diphosphate: step 7/9. In Hydrogenobaculum sp. (strain Y04AAS1), this protein is Histidinol-phosphate aminotransferase.